The primary structure comprises 151 residues: Deoxyuridine 5'-triphosphate nucleotidohydrolase (151 aa).

Substrate contacts are provided by residues 70-72, asparagine 83, 87-89, and methionine 97; these read RSG and LID.

Belongs to the dUTPase family. Mg(2+) is required as a cofactor.

The catalysed reaction is dUTP + H2O = dUMP + diphosphate + H(+). It participates in pyrimidine metabolism; dUMP biosynthesis; dUMP from dCTP (dUTP route): step 2/2. This enzyme is involved in nucleotide metabolism: it produces dUMP, the immediate precursor of thymidine nucleotides and it decreases the intracellular concentration of dUTP so that uracil cannot be incorporated into DNA. The polypeptide is Deoxyuridine 5'-triphosphate nucleotidohydrolase (Pseudomonas putida (strain W619)).